Reading from the N-terminus, the 131-residue chain is MALSDSIGDFLARIRNAQLAMHKTTRVLFSKVNSSILKILKDEGYILDYQKEVVGNIPSFVVKLKYYERSPVISDIVRVSKPGCRCYSKYKDISKAYNGLGIFIISTSKGVMTDYDAHKLKFGGEILCRVF.

This sequence belongs to the universal ribosomal protein uS8 family. Part of the 30S ribosomal subunit. Contacts proteins S5 and S12.

In terms of biological role, one of the primary rRNA binding proteins, it binds directly to 16S rRNA central domain where it helps coordinate assembly of the platform of the 30S subunit. This is Small ribosomal subunit protein uS8 from Wolbachia sp. subsp. Brugia malayi (strain TRS).